We begin with the raw amino-acid sequence, 452 residues long: MRYLPLTDADRSAMLSVVGAGSVDELFADVPAEARLSAPIAGLPNHASEMAVERHMARLSANNVTAGSVPFFLGAGAYRHHVPATVDHMIQRGEFLTAYTPYQPEIAQGTLQVLFEFQTQVARLFGTDVANASLYDGSTACWEAIAMAGRITKRGKALLSGGLHPHYVETARTMARFTGDVLDTSAPVLTAAPDDDALVARIDGETSCVVVQYPDILGRIPDLAKIAAAAQAQGALLITVVTEPVALGVLQSPGSLGADIVVGEGQSLGVGLQFGGPYLGLFGCREKYLRQIPGRLCGETVDADGKRGFVLTLSTREQHIRREKATSNICTNSGLCALAFSIHLTLLGGSGLADMARLSHLAARKTAAALAQVSGIEVVNSHFFNEFTVALPHDARQIVRDLADRHVLGGVSLGRLYPQEAALANGMVVAATECTTDEDIAALVAALKEVLA.

The protein belongs to the GcvP family. N-terminal subunit subfamily. In terms of assembly, the glycine cleavage system is composed of four proteins: P, T, L and H. In this organism, the P 'protein' is a heterodimer of two subunits.

It carries out the reaction N(6)-[(R)-lipoyl]-L-lysyl-[glycine-cleavage complex H protein] + glycine + H(+) = N(6)-[(R)-S(8)-aminomethyldihydrolipoyl]-L-lysyl-[glycine-cleavage complex H protein] + CO2. In terms of biological role, the glycine cleavage system catalyzes the degradation of glycine. The P protein binds the alpha-amino group of glycine through its pyridoxal phosphate cofactor; CO(2) is released and the remaining methylamine moiety is then transferred to the lipoamide cofactor of the H protein. This Novosphingobium aromaticivorans (strain ATCC 700278 / DSM 12444 / CCUG 56034 / CIP 105152 / NBRC 16084 / F199) protein is Probable glycine dehydrogenase (decarboxylating) subunit 1.